We begin with the raw amino-acid sequence, 200 residues long: Chromophore lyase CpcT/CpeT 2 (200 aa).

The protein belongs to the CpcT/CpeT biliprotein lyase family.

Functionally, covalently attaches a chromophore to Cys residue(s) of phycobiliproteins. The sequence is that of Chromophore lyase CpcT/CpeT 2 from Microcystis aeruginosa (strain NIES-843 / IAM M-2473).